The primary structure comprises 487 residues: N-succinylglutamate 5-semialdehyde dehydrogenase (487 aa).

NAD(+) is bound at residue 221–226; sequence GSSDTG. Catalysis depends on residues Glu244 and Cys278.

This sequence belongs to the aldehyde dehydrogenase family. AstD subfamily.

The catalysed reaction is N-succinyl-L-glutamate 5-semialdehyde + NAD(+) + H2O = N-succinyl-L-glutamate + NADH + 2 H(+). Its pathway is amino-acid degradation; L-arginine degradation via AST pathway; L-glutamate and succinate from L-arginine: step 4/5. In terms of biological role, catalyzes the NAD-dependent reduction of succinylglutamate semialdehyde into succinylglutamate. The polypeptide is N-succinylglutamate 5-semialdehyde dehydrogenase (Burkholderia cenocepacia (strain HI2424)).